The sequence spans 319 residues: Eukaryotic translation initiation factor 3 subunit H (319 aa).

Positions 19–153 (VQIDGLVVLK…LKCYRLTQSF (135 aa)) constitute an MPN domain.

It belongs to the eIF-3 subunit H family. In terms of assembly, component of the eukaryotic translation initiation factor 3 (eIF-3) complex.

Its subcellular location is the cytoplasm. Functionally, component of the eukaryotic translation initiation factor 3 (eIF-3) complex, which is involved in protein synthesis of a specialized repertoire of mRNAs and, together with other initiation factors, stimulates binding of mRNA and methionyl-tRNAi to the 40S ribosome. The eIF-3 complex specifically targets and initiates translation of a subset of mRNAs involved in cell proliferation. In Dictyostelium discoideum (Social amoeba), this protein is Eukaryotic translation initiation factor 3 subunit H (eif3H).